The primary structure comprises 48 residues: Large ribosomal subunit protein bL33A (48 aa).

The protein belongs to the bacterial ribosomal protein bL33 family.

In Bacillus mycoides (strain KBAB4) (Bacillus weihenstephanensis), this protein is Large ribosomal subunit protein bL33A.